A 153-amino-acid polypeptide reads, in one-letter code: SsrA-binding protein (153 aa).

This sequence belongs to the SmpB family.

The protein localises to the cytoplasm. Required for rescue of stalled ribosomes mediated by trans-translation. Binds to transfer-messenger RNA (tmRNA), required for stable association of tmRNA with ribosomes. tmRNA and SmpB together mimic tRNA shape, replacing the anticodon stem-loop with SmpB. tmRNA is encoded by the ssrA gene; the 2 termini fold to resemble tRNA(Ala) and it encodes a 'tag peptide', a short internal open reading frame. During trans-translation Ala-aminoacylated tmRNA acts like a tRNA, entering the A-site of stalled ribosomes, displacing the stalled mRNA. The ribosome then switches to translate the ORF on the tmRNA; the nascent peptide is terminated with the 'tag peptide' encoded by the tmRNA and targeted for degradation. The ribosome is freed to recommence translation, which seems to be the essential function of trans-translation. The protein is SsrA-binding protein of Sulfurovum sp. (strain NBC37-1).